The sequence spans 367 residues: MKSRLQVRSAHVPLWSWIIPLFGCVIAAMTLAHVLPERSVVLLLMSAGLLTGAVFASVHHAEILAARVGQPSGAILLAVCVTIIEVAIIGSLMLSGAEGNEEVARDTVFAAVMIVLNGVIGLCLVLGGRRHREQSFQLNAASAALAVLGTLATLSLVLPNFVTAGKPQQFAAIQLVVIGLVSVVLYGVFLFVQTVRHRDYFIDDEDAASPPATHETPRNPLAAGALLVLALIAVILLAMLLSYPLDSAVEALGLPQAVVGVTIAGVVLLPEGITSVKAALMNRLQNSINLVLGSALASIGVTIPVVAAISVALGRDLALGLAPQNLIMLILTLFVGTITLGTGRTTVLQGAVHLAIFTVFLLLSAIP.

Helical transmembrane passes span 12–32 (VPLW…MTLA), 39–59 (SVVL…ASVH), 74–94 (AILL…SLML), 108–128 (VFAA…VLGG), 143–163 (AALA…NFVT), 172–192 (AIQL…FLFV), 221–241 (LAAG…AMLL), 249–269 (VEAL…VVLL), 291–311 (VLGS…AISV), 318–338 (ALGL…VGTI), and 347–367 (VLQG…SAIP).

This sequence belongs to the Ca(2+):cation antiporter (CaCA) (TC 2.A.19) family.

The protein resides in the cell membrane. Possible cation transporter. This Sinorhizobium fredii (strain NBRC 101917 / NGR234) protein is Putative ionic transporter y4hA.